Reading from the N-terminus, the 167-residue chain is UPF0598 protein CG30010 (167 aa).

This sequence belongs to the UPF0598 family.

The protein is UPF0598 protein CG30010 of Drosophila melanogaster (Fruit fly).